Reading from the N-terminus, the 288-residue chain is Large ribosomal subunit protein uL2 (288 aa).

Residues 232–265 are disordered; the sequence is GTAMNPVDHPHGGGEGKTKGKHPESPWGWKTKGY. The segment covering 239 to 255 has biased composition (basic and acidic residues); it reads DHPHGGGEGKTKGKHPE.

The protein belongs to the universal ribosomal protein uL2 family. In terms of assembly, part of the 50S ribosomal subunit. Forms a bridge to the 30S subunit in the 70S ribosome.

Its function is as follows. One of the primary rRNA binding proteins. Required for association of the 30S and 50S subunits to form the 70S ribosome, for tRNA binding and peptide bond formation. It has been suggested to have peptidyltransferase activity; this is somewhat controversial. Makes several contacts with the 16S rRNA in the 70S ribosome. The protein is Large ribosomal subunit protein uL2 of Hydrogenobaculum sp. (strain Y04AAS1).